Consider the following 119-residue polypeptide: ATP-dependent Clp protease adapter protein ClpS (119 aa).

Positions 1–29 are disordered; that stretch reads MICPPGENKSMAERKQGGQGNGVGSSVVT.

This sequence belongs to the ClpS family. As to quaternary structure, binds to the N-terminal domain of the chaperone ClpA.

Involved in the modulation of the specificity of the ClpAP-mediated ATP-dependent protein degradation. This chain is ATP-dependent Clp protease adapter protein ClpS, found in Caulobacter vibrioides (strain ATCC 19089 / CIP 103742 / CB 15) (Caulobacter crescentus).